The following is a 1576-amino-acid chain: MGSTTFENPTRIEILGKEDIIVDFDIWRNFVAEDLLSDLPSSTYVLITDTNLSPLYVPAFQQSFEALAAKSSSTPRLLTYEIPPGENSKSRETKAEIEDWMLSHQCTRDSVIIALGGGVIGDMIGYVAATFMRGVRFVQVPTTLLAMVDSSIGGKTAIDTPLGKNLVGAFWQPQRIYIDLRFLETLPVREFINGMAEVVKTAAIWDEAEFSALEDNANLIMTTIRAKNTDCSTRLGPIRDILKRIVLGSAKTKADVVSADEREGGLRNILNFGHSIGHAFEAILTPQVLHGEAVAIGMVKEAELARHLGVLKPGAVARLVKCIASYGLPTSLADKRIQKLTAGKLCPVDVLLEKMGVDKKNDGRKKKIVLLSAIGKTYEPKASVVEDRSIRVVLSDSVEVRPSVPETLNVEVTPPGSKSISNRALVLAALGTGPCRIKNLLHSDDVEFMLTSIGKLGGATYAWEDAGEVLCVQGKGGDLHASPTELYIGNAGTASRFLTTVVSLCKPSASTKSTILTGNARMKVRPIGPLVDSLRANGVDIEYLEKEHSLPLNVAASGGFTGGDINLAATVSSQYVSSLLMCAPYAKNPVTLRLVGGKPISQLYIDMTTAMMAAFGIHVVRSQTEEHTYHIPQGVYKNPEEYVVESDASSATYPLAVAAISGTTCTIPNIGCKSIQGDARFAIDVLKPMGCKVVQTDYSTTVTGPPIGSLQAIEEVDMEPMTDAFLTASVLGAVAKGTTKIRGIANQRVKECNRIKAMKDELAKFGVTCRELEDGIEVDGVPIKDLKHPAEGIHCYDDHRVAMSFSVLSVAASQPVLIEERECVGKTWPGWWDILSKSFQVELAGKEVKATHSKKIGIPALPDKSIFIIGMRGAGKTTAGAWAAKILGRPYKDLDVELERISGMSIPDMVRSKGWDFFRAAELDLLKHCLTDQPEKHVFACGGGVVEMPEARELLINFHKSGGIVLLVHRDTEQVMDYLRIDKTRPAYVEDMMGVYSRRKPWFNECSNFQYHSKGSGASALSVAEQDFARFLHHISGKSLHFDEMRNKPQSFFVSLTMPDISGAAYILPSVAVGSDAVEVRVDLLEDPSSTNGIPGTDFLSVQIAHLRSVVHLPVIFTVRTVSQGGRFPDAAHEEALKLYKLAVKMGIEYIDLEIAFPDELLQEVTEAKGFSRIIASHHDPQGTLSWKNGGWFQHYNRALQYGDIIKLVGSAKSIEDNFALAKFKKTMAAAHDTPLIAINMGVTGKLSRVLNGFMTPVSHPSLPFKAAPGQLSAAEIRSTLSTLGEIEPKSFYLFGTPISQSRSPALHNTLFKQTGLPHRYSRLETDRVADVQDVIRAPDFGGASVTIPLKLDIIPLLDSVTDAVKVIGAVNTIIPTPDNPPRLVGENTDWLGMTHSLMSASHTPSPVDSPSPALVIGAGGTARAAIYALHSLGHSPIYMVARTPSKLDTLINSFPSSFNIIPLPSTTSATELTTPPAVAISTIPADRPIESNMRETLAVLLRHEKKDEGKQRTLLEMAYKPSQTPLMRMAEDAGWVAIPGLEVLSAQGWYQFQKWTSIQPLYVDARAAVMGDSTA.

Positions 1-387 (MGSTTFENPT…YEPKASVVED (387 aa)) are 3-dehydroquinate synthase. NAD(+) contacts are provided by residues 49–51 (DTN), 86–89 (ENSK), 117–119 (GGV), and aspartate 122. Residue arginine 133 participates in 7-phospho-2-dehydro-3-deoxy-D-arabino-heptonate binding. 142-143 (TT) contacts NAD(+). 7-phospho-2-dehydro-3-deoxy-D-arabino-heptonate-binding residues include aspartate 149 and lysine 155. Residue lysine 164 participates in NAD(+) binding. Asparagine 165 contributes to the 7-phospho-2-dehydro-3-deoxy-D-arabino-heptonate binding site. NAD(+) is bound by residues 182–185 (FLET) and asparagine 193. Zn(2+) is bound at residue glutamate 197. 7-phospho-2-dehydro-3-deoxy-D-arabino-heptonate contacts are provided by residues 197–200 (EVVK) and lysine 253. Glutamate 263 (proton acceptor; for 3-dehydroquinate synthase activity) is an active-site residue. Residues 267–271 (RNILN) and histidine 274 contribute to the 7-phospho-2-dehydro-3-deoxy-D-arabino-heptonate site. Histidine 274 lines the Zn(2+) pocket. Catalysis depends on histidine 278, which acts as the Proton acceptor; for 3-dehydroquinate synthase activity. 7-phospho-2-dehydro-3-deoxy-D-arabino-heptonate is bound by residues histidine 290 and lysine 359. Histidine 290 lines the Zn(2+) pocket. Residues 400–841 (VRPSVPETLN…WDILSKSFQV (442 aa)) form an EPSP synthase region. Residue cysteine 823 is the For EPSP synthase activity of the active site. Residues 863 to 1055 (DKSIFIIGMR…RNKPQSFFVS (193 aa)) are shikimate kinase. Residue 870 to 877 (GMRGAGKT) coordinates ATP. Residues 1056–1276 (LTMPDISGAA…AAPGQLSAAE (221 aa)) are 3-dehydroquinase. The active-site Proton acceptor; for 3-dehydroquinate dehydratase activity is histidine 1179. Residue lysine 1207 is the Schiff-base intermediate with substrate; for 3-dehydroquinate dehydratase activity of the active site. Residues 1289–1576 (PKSFYLFGTP…RAAVMGDSTA (288 aa)) are shikimate dehydrogenase.

The protein in the N-terminal section; belongs to the sugar phosphate cyclases superfamily. Dehydroquinate synthase family. This sequence in the 2nd section; belongs to the EPSP synthase family. It in the 3rd section; belongs to the shikimate kinase family. In the 4th section; belongs to the type-I 3-dehydroquinase family. The protein in the C-terminal section; belongs to the shikimate dehydrogenase family. As to quaternary structure, homodimer. Requires Zn(2+) as cofactor.

It is found in the cytoplasm. It carries out the reaction 7-phospho-2-dehydro-3-deoxy-D-arabino-heptonate = 3-dehydroquinate + phosphate. The enzyme catalyses 3-dehydroquinate = 3-dehydroshikimate + H2O. It catalyses the reaction shikimate + NADP(+) = 3-dehydroshikimate + NADPH + H(+). The catalysed reaction is shikimate + ATP = 3-phosphoshikimate + ADP + H(+). It carries out the reaction 3-phosphoshikimate + phosphoenolpyruvate = 5-O-(1-carboxyvinyl)-3-phosphoshikimate + phosphate. It functions in the pathway metabolic intermediate biosynthesis; chorismate biosynthesis; chorismate from D-erythrose 4-phosphate and phosphoenolpyruvate: step 2/7. It participates in metabolic intermediate biosynthesis; chorismate biosynthesis; chorismate from D-erythrose 4-phosphate and phosphoenolpyruvate: step 3/7. The protein operates within metabolic intermediate biosynthesis; chorismate biosynthesis; chorismate from D-erythrose 4-phosphate and phosphoenolpyruvate: step 4/7. Its pathway is metabolic intermediate biosynthesis; chorismate biosynthesis; chorismate from D-erythrose 4-phosphate and phosphoenolpyruvate: step 5/7. It functions in the pathway metabolic intermediate biosynthesis; chorismate biosynthesis; chorismate from D-erythrose 4-phosphate and phosphoenolpyruvate: step 6/7. Functionally, the AROM polypeptide catalyzes 5 consecutive enzymatic reactions in prechorismate polyaromatic amino acid biosynthesis. The sequence is that of Pentafunctional AROM polypeptide from Sclerotinia sclerotiorum (strain ATCC 18683 / 1980 / Ss-1) (White mold).